Reading from the N-terminus, the 207-residue chain is Holliday junction resolvase RecU (207 aa).

The tract at residues 1-30 is disordered; the sequence is MPIRYPNGQPYSRSPKQGQAKKPLPADTYS. The Mg(2+) site is built by Thr-87, Asp-89, Glu-102, and Gln-121.

The protein belongs to the RecU family. Mg(2+) is required as a cofactor.

Its subcellular location is the cytoplasm. The catalysed reaction is Endonucleolytic cleavage at a junction such as a reciprocal single-stranded crossover between two homologous DNA duplexes (Holliday junction).. Functionally, endonuclease that resolves Holliday junction intermediates in genetic recombination. Cleaves mobile four-strand junctions by introducing symmetrical nicks in paired strands. Promotes annealing of linear ssDNA with homologous dsDNA. Required for DNA repair, homologous recombination and chromosome segregation. The chain is Holliday junction resolvase RecU from Shouchella clausii (strain KSM-K16) (Alkalihalobacillus clausii).